Reading from the N-terminus, the 336-residue chain is Cell division protein ZipA (336 aa).

Residues 1-6 lie on the Periplasmic side of the membrane; the sequence is MMQDLR. Residues 7–27 traverse the membrane as a helical segment; it reads LILIVVGAIAIIALLLHGLWT. Residues 28–336 lie on the Cytoplasmic side of the membrane; sequence SRKERSSLFR…RIRDVLKANA (309 aa). Residues 40–51 show a composition bias toward basic and acidic residues; it reads PVKRAKKARDET. A disordered region spans residues 40 to 190; that stretch reads PVKRAKKARD…APAQPQQPAE (151 aa). Residues 76 to 89 show a composition bias toward low complexity; that stretch reads SFSSSSFDNASFDN. Positions 126-138 are enriched in polar residues; sequence PRSQVRGDSNPQV. The segment covering 179–190 has biased composition (low complexity); that stretch reads QPAPAQPQQPAE.

It belongs to the ZipA family. Interacts with FtsZ via their C-terminal domains.

Its subcellular location is the cell inner membrane. Functionally, essential cell division protein that stabilizes the FtsZ protofilaments by cross-linking them and that serves as a cytoplasmic membrane anchor for the Z ring. Also required for the recruitment to the septal ring of downstream cell division proteins. This Pectobacterium carotovorum subsp. carotovorum (strain PC1) protein is Cell division protein ZipA.